We begin with the raw amino-acid sequence, 360 residues long: MKQEFTRIAVKVGSNVLARRDGTLDVTRMSALVDQIAELNKSGVEIILISSGAVASGRSEIHPQKKLDSVDQRQLFSAVGQAKLINRYYELFREHGIAVGQVLTTKENFSTRRHYLNQKNCMTVMLENGVIPIVNENDTISVSELMFTDNDELSGLIASMMDAQALIILSNIDGIYNGSPSDPASAVIREIEHGKDLSNYIQATKSSFGRGGMLTKTNIARKVADEGITVIIANGKRDNILVDLLQQPDDTVCTRFIPSTEAVSSVKKWIAHSEGFAKGEIHINECATDILSSEKAASILPVGITHIEGEFEKDDIVRIMDFLGNQVGVGKANCDSAQAREAMGKHGKKPVVHYDYLYIE.

Lys11 lines the ATP pocket. The substrate site is built by Ser51, Asp138, and Asn150. The PUA domain occupies 278-356; that stretch reads KGEIHINECA…GKKPVVHYDY (79 aa).

The protein belongs to the glutamate 5-kinase family.

The protein resides in the cytoplasm. The catalysed reaction is L-glutamate + ATP = L-glutamyl 5-phosphate + ADP. It participates in amino-acid biosynthesis; L-proline biosynthesis; L-glutamate 5-semialdehyde from L-glutamate: step 1/2. Catalyzes the transfer of a phosphate group to glutamate to form L-glutamate 5-phosphate. In Bacteroides thetaiotaomicron (strain ATCC 29148 / DSM 2079 / JCM 5827 / CCUG 10774 / NCTC 10582 / VPI-5482 / E50), this protein is Glutamate 5-kinase.